Here is a 240-residue protein sequence, read N- to C-terminus: Acyl-protein thioesterase 1 (240 aa).

Active-site charge relay system residues include Ser129, Asp183, and His219.

The protein belongs to the AB hydrolase superfamily. AB hydrolase 2 family.

It is found in the cytoplasm. It localises to the nucleus. The catalysed reaction is S-hexadecanoyl-L-cysteinyl-[protein] + H2O = L-cysteinyl-[protein] + hexadecanoate + H(+). Hydrolyzes fatty acids from S-acylated cysteine residues in proteins with a strong preference for palmitoylated G-alpha proteins over other acyl substrates. Mediates the deacylation of G-alpha proteins such as GPA1 in vivo, but has weak or no activity toward palmitoylated Ras proteins. Has weak lysophospholipase activity in vitro; however such activity may not exist in vivo. In Mycosarcoma maydis (Corn smut fungus), this protein is Acyl-protein thioesterase 1.